We begin with the raw amino-acid sequence, 384 residues long: MNYLVNYCKISFYFLMSISLSLFLISLKFLLMDLVYFIEWEILSLQSMSIVMTFLFDWMSLMFMSFVLLISSLVIFYSNQYMEEDYNINRFILLVLMFVMSMMMLIISPNLISILLGWDGLGLVSYCLVIYFQNVKSYNAGMLTALSNRIGDVALLLAIAWMLNYGSWNYIFYLDMMKNNIEMMIIGGLVMLAAMTKSAQIPFSSWLPAAMAAPTPVSALVHSSTLVTAGVYLLIRFNDVLMNWWMAQFLLLVSGLTMFMAGLGANFEFDLKKIIALSTLSQLGLMMSILSMGFYKLAFFHLLTHALFKALLFMCAGSIIHNMKNSQDIRMMGSLSMSMPLTCSCFNVANLALCGMPFLAGFYSKDLILEMVMLSYVNVFSFFL.

A run of 12 helical transmembrane segments spans residues 12 to 32 (FYFL…FLLM), 50 to 70 (IVMT…VLLI), 92 to 112 (ILLV…PNLI), 113 to 133 (SILL…IYFQ), 153 to 173 (VALL…YIFY), 183 to 203 (MMII…QIPF), 215 to 235 (TPVS…YLLI), 244 to 264 (WWMA…AGLG), 274 to 293 (IIAL…LSMG), 298 to 320 (AFFH…GSII), 343 to 363 (CSCF…AGFY), and 364 to 384 (SKDL…SFFL).

Belongs to the complex I subunit 5 family.

It is found in the mitochondrion inner membrane. It carries out the reaction a ubiquinone + NADH + 5 H(+)(in) = a ubiquinol + NAD(+) + 4 H(+)(out). Functionally, core subunit of the mitochondrial membrane respiratory chain NADH dehydrogenase (Complex I) that is believed to belong to the minimal assembly required for catalysis. Complex I functions in the transfer of electrons from NADH to the respiratory chain. The immediate electron acceptor for the enzyme is believed to be ubiquinone. The chain is NADH-ubiquinone oxidoreductase chain 5 (ND5) from Anopheles arabiensis (Mosquito).